The chain runs to 211 residues: MTKVLYVSANPKPTELSYSKQVAETFVSTLKAENASIEVEAIELYDVDVQEIDGDVLSAWGKFASGEALTDVEAKKVGTMSGMLEKFMEADLYVFATPMWNFFFPARMKMFLDSVLMAGKTFRYTEQGPVGLLENKQAIHIQGTGGIYTGTDLNFADAYLRQALAFVGVSEVTTVAVEGMNQYPDKIEEIVADAKAKAEALAKEVAGAVTV.

Residues 17-19 (SYS) and 99-102 (MWNF) contribute to the FMN site.

The protein belongs to the azoreductase type 1 family. Homodimer. Requires FMN as cofactor.

It catalyses the reaction 2 a quinone + NADH + H(+) = 2 a 1,4-benzosemiquinone + NAD(+). The enzyme catalyses N,N-dimethyl-1,4-phenylenediamine + anthranilate + 2 NAD(+) = 2-(4-dimethylaminophenyl)diazenylbenzoate + 2 NADH + 2 H(+). Quinone reductase that provides resistance to thiol-specific stress caused by electrophilic quinones. Functionally, also exhibits azoreductase activity. Catalyzes the reductive cleavage of the azo bond in aromatic azo compounds to the corresponding amines. This chain is FMN-dependent NADH:quinone oxidoreductase, found in Exiguobacterium sp. (strain ATCC BAA-1283 / AT1b).